The primary structure comprises 503 residues: AMP phosphorylase (503 aa).

Residues G168, 194-199, and T203 contribute to the AMP site; that span reads SRAITS. D256 functions as the Proton donor in the catalytic mechanism. 2 residues coordinate AMP: S264 and K288.

The protein belongs to the thymidine/pyrimidine-nucleoside phosphorylase family. Type 2 subfamily.

The catalysed reaction is AMP + phosphate = alpha-D-ribose 1,5-bisphosphate + adenine. The enzyme catalyses CMP + phosphate = cytosine + alpha-D-ribose 1,5-bisphosphate. It catalyses the reaction UMP + phosphate = alpha-D-ribose 1,5-bisphosphate + uracil. Catalyzes the conversion of AMP and phosphate to adenine and ribose 1,5-bisphosphate (R15P). Exhibits phosphorylase activity toward CMP and UMP in addition to AMP. Functions in an archaeal AMP degradation pathway, together with R15P isomerase and RubisCO. This Methanocaldococcus jannaschii (strain ATCC 43067 / DSM 2661 / JAL-1 / JCM 10045 / NBRC 100440) (Methanococcus jannaschii) protein is AMP phosphorylase.